The sequence spans 760 residues: Striatin-4 (760 aa).

Residues 1-65 (MMEERAAAAV…PTAGPEPLSL (65 aa)) form a disordered region. Over residues 7–35 (AAAVASAASSCRPLGSGTAPNPTAAAPAS) the composition is skewed to low complexity. A compositionally biased stretch (gly residues) spans 43 to 54 (PVGKGGGGGGSP). The residue at position 53 (Ser-53) is a Phosphoserine. Positions 69–136 (LHFIQHEWAR…QERAKYHKLK (68 aa)) form a coiled coil. Positions 71-79 (FIQHEWARF) are caveolin-binding. The tract at residues 165 to 182 (ENSPLVWKEGRQLLRQYL) is calmodulin-binding. Phosphoserine is present on residues Ser-206, Ser-223, and Ser-276. Disordered stretches follow at residues 210-233 (NGAG…SGGE) and 272-346 (EDED…PHEL). Acidic residues-rich tracts occupy residues 272 to 283 (EDEDSDEDDELD) and 302 to 317 (EMED…DAIN). The span at 332-346 (PDPRRCTSEGNPHEL) shows a compositional bias: basic and acidic residues. WD repeat units follow at residues 443 to 482 (SHYD…TAKK), 496 to 535 (AHRG…MDPY), 549 to 588 (GHGD…PSCL), 595 to 635 (GEHG…ALLT), 642 to 681 (SGPA…SVHS), 684 to 723 (AHLD…CVQE), and 730 to 759 (KHEE…AKVF).

It belongs to the WD repeat striatin family. In terms of assembly, part of the core of STRIPAK complexes composed of PP2A catalytic and scaffolding subunits, the striatins (PP2A regulatory subunits), the striatin-associated proteins MOB4, STRIP1 and STRIP2, PDCD10 and members of the STE20 kinases, such as STK24 and STK26. Interacts with CTTNBP2NL. In terms of tissue distribution, mainly expressed in brain but is also expressed at low levels in the kidney.

It is found in the cytoplasm. The protein localises to the membrane. It localises to the cell projection. The protein resides in the dendritic spine. Calmodulin-binding scaffolding protein which is the center of the striatin-interacting phosphatase and kinase (STRIPAK) complexes. STRIPAK complexes have critical roles in protein (de)phosphorylation and are regulators of multiple signaling pathways including Hippo, MAPK, nuclear receptor and cytoskeleton remodeling. Different types of STRIPAK complexes are involved in a variety of biological processes such as cell growth, differentiation, apoptosis, metabolism and immune regulation. Key regulator of the expanded Hippo signaling pathway by interacting and allowing the inhibition of MAP4K kinases by the STRIPAK complex. This is Striatin-4 (Strn4) from Mus musculus (Mouse).